A 119-amino-acid polypeptide reads, in one-letter code: Basic phospholipase A2 homolog 1 (119 aa).

Cystine bridges form between Cys11/Cys72, Cys27/Cys118, Cys29/Cys45, Cys44/Cys99, Cys51/Cys92, Cys61/Cys85, and Cys79/Cys90. Positions 107–117 (KENYNIDPKKR) are important for membrane-damaging activities in eukaryotes and bacteria; heparin-binding.

This sequence belongs to the phospholipase A2 family. Group I subfamily. D49 sub-subfamily. Expressed by the venom gland.

Its subcellular location is the secreted. The polypeptide is Basic phospholipase A2 homolog 1 (Notechis scutatus scutatus (Mainland tiger snake)).